A 72-amino-acid chain; its full sequence is UPF0495 protein KLLA0D04334g (72 aa).

The chain crosses the membrane as a helical span at residues 20–42 (PVELTPLFLAMGVALASGTWFSY).

It belongs to the UPF0495 family.

Its subcellular location is the membrane. This chain is UPF0495 protein KLLA0D04334g, found in Kluyveromyces lactis (strain ATCC 8585 / CBS 2359 / DSM 70799 / NBRC 1267 / NRRL Y-1140 / WM37) (Yeast).